A 287-amino-acid chain; its full sequence is ATP synthase gamma chain (287 aa).

The protein belongs to the ATPase gamma chain family. As to quaternary structure, F-type ATPases have 2 components, CF(1) - the catalytic core - and CF(0) - the membrane proton channel. CF(1) has five subunits: alpha(3), beta(3), gamma(1), delta(1), epsilon(1). CF(0) has three main subunits: a, b and c. The F(1)F(0) complex interacts with SpoIIIJ and YqjG; YqgA is found in the same complex. Interacts with FloT.

Its subcellular location is the cell membrane. It is found in the membrane raft. Functionally, produces ATP from ADP in the presence of a proton gradient across the membrane. The gamma chain is believed to be important in regulating ATPase activity and the flow of protons through the CF(0) complex. This is ATP synthase gamma chain from Bacillus subtilis (strain 168).